The chain runs to 913 residues: Rab GTPase-activating protein tbc-8 (913 aa).

Positions 1–24 (MQMFRHSSADMWRAKKPTLERRST) are disordered. Positions 106 to 240 (NLNSPYVTSL…TYRRMSNRIE (135 aa)) constitute an RUN domain. Residues 597-844 (INTKEVRRMA…KVWEVIWAAQ (248 aa)) enclose the Rab-GAP TBC domain.

It belongs to the RUTBC family. In terms of assembly, interacts with rab-19. Interacts with ric-19; the interaction is direct and may be required for the activation of rab-2 and dense vesicle maturation in cholinergic motoneurons. Interacts (via RUN domain) with rund-1. Does not interact with unc-108 (GTP-bound form). Expressed in neurons in the head, tail and ventral nerve cord (at protein level).

It localises to the golgi apparatus. Its subcellular location is the trans-Golgi network. The protein resides in the early endosome. It is found in the cytoplasmic vesicle membrane. Functionally, interacts with numerous Rab family members, functioning as Rab effector for some, and as GTPase activator for others. GTPase activator for rab-2. In association with ric-19 activates rab-2 during dense core vesicle maturation in cholinergic motoneurons. This is Rab GTPase-activating protein tbc-8 from Caenorhabditis elegans.